Consider the following 236-residue polypeptide: Phosphoribosylaminoimidazole-succinocarboxamide synthase (236 aa).

It belongs to the SAICAR synthetase family.

The catalysed reaction is 5-amino-1-(5-phospho-D-ribosyl)imidazole-4-carboxylate + L-aspartate + ATP = (2S)-2-[5-amino-1-(5-phospho-beta-D-ribosyl)imidazole-4-carboxamido]succinate + ADP + phosphate + 2 H(+). Its pathway is purine metabolism; IMP biosynthesis via de novo pathway; 5-amino-1-(5-phospho-D-ribosyl)imidazole-4-carboxamide from 5-amino-1-(5-phospho-D-ribosyl)imidazole-4-carboxylate: step 1/2. The chain is Phosphoribosylaminoimidazole-succinocarboxamide synthase (purC) from Lactococcus lactis subsp. lactis (strain IL1403) (Streptococcus lactis).